Here is a 358-residue protein sequence, read N- to C-terminus: Snurportin-1 (358 aa).

Met-1 bears the N-acetylmethionine mark. 2 disordered regions span residues 1–39 and 69–89; these read MEEL…SSLE and DWTG…EMDL. Positions 1–65 are necessary for interaction with KPNB1 and m3G-cap U1 and U5 snRNP import receptor activity; that stretch reads MEELSQALAS…LDYVNHARRL (65 aa). A necessary for interaction with XPO1 region spans residues 1-160; sequence MEELSQALAS…NRFSSLLPGG (160 aa). 2 stretches are compositionally biased toward polar residues: residues 7–22 and 30–39; these read ALAS…NSTA and QYKSKYSSLE. One can recognise an IBB domain in the interval 11 to 73; that stretch reads SFSVSQELNS…RLAEDDWTGM (63 aa). Phosphoserine is present on Ser-75. The tract at residues 128–130 is interaction with m3G-cap structure; that stretch reads GKR. The interval 210–329 is necessary for binding to the m3G-cap structure; it reads MNSKLPEEEG…DTKEKLTHKA (120 aa). The segment covering 315–341 has biased composition (basic and acidic residues); sequence KRSQEDTKEKLTHKASENGHYELEHLS. The tract at residues 315–358 is disordered; sequence KRSQEDTKEKLTHKASENGHYELEHLSTPKLRSPPHSSESLMDS. Positions 349–358 are enriched in polar residues; the sequence is PHSSESLMDS. At Ser-351 the chain carries Phosphoserine.

The protein belongs to the snurportin family. Component of an import snRNP complex composed of KPNB1, SNUPN, SMN1 and ZNF259. Component of a nuclear export receptor complex composed of KPNB1, Ran, SNUPN and XPO1. Found in a trimeric export complex with SNUPN, Ran and XPO1. Interacts (via IBB domain) with KPNB1; the interaction is direct. Interacts with DDX20, IPO7, SMN1, SNRPB and XPO1. Interacts directly with XPO1. Its interaction with XPO1 and binding to m3G-cap U snRNPs appears to be mutually exclusive. Can form homomers.

Its subcellular location is the nucleus. It localises to the cytoplasm. In terms of biological role, functions as an U snRNP-specific nuclear import adapter. Involved in the trimethylguanosine (m3G)-cap-dependent nuclear import of U snRNPs. Binds specifically to the terminal m3G-cap U snRNAs. The protein is Snurportin-1 (Snupn) of Rattus norvegicus (Rat).